Reading from the N-terminus, the 127-residue chain is Small ribosomal subunit protein uS11 (127 aa).

This sequence belongs to the universal ribosomal protein uS11 family. In terms of assembly, part of the 30S ribosomal subunit. Interacts with proteins S7 and S18. Binds to IF-3.

Functionally, located on the platform of the 30S subunit, it bridges several disparate RNA helices of the 16S rRNA. Forms part of the Shine-Dalgarno cleft in the 70S ribosome. The protein is Small ribosomal subunit protein uS11 of Nitrosococcus oceani (strain ATCC 19707 / BCRC 17464 / JCM 30415 / NCIMB 11848 / C-107).